Consider the following 61-residue polypeptide: MPFVTIQFLEGRSDDQKKALVSEVTDVVSKNLKAPKENIHVILEEMKKTDYGVGGVRKSDI.

Catalysis depends on Pro-2, which acts as the Proton acceptor; via imino nitrogen.

Belongs to the 4-oxalocrotonate tautomerase family.

The sequence is that of Probable tautomerase lin2709 from Listeria innocua serovar 6a (strain ATCC BAA-680 / CLIP 11262).